The following is a 444-amino-acid chain: ATP-dependent RNA helicase SrmB (444 aa).

Positions 4–32 match the Q motif motif; the sequence is TTFSELELDESLLEALQDKGFTRPTAIQA. The region spanning 35–209 is the Helicase ATP-binding domain; sequence IPPALDGRDV…AERLLEDPVE (175 aa). 48-55 contacts ATP; it reads APTGTGKT. Positions 157-160 match the DEAD box motif; sequence DEAD. One can recognise a Helicase C-terminal domain in the interval 238–387; it reads LLVHLLKQPE…ELRPKTRAPS (150 aa). Over residues 382-391 the composition is skewed to basic and acidic residues; sequence KTRAPSEKQT. The segment at 382–444 is disordered; the sequence is KTRAPSEKQT…TGVPPQTTEE (63 aa). Composition is skewed to basic residues over residues 394 to 406 and 414 to 432; these read PSKKVLAKRAEKK and PRVKKRHRDTKNIGKRRKP.

Belongs to the DEAD box helicase family. SrmB subfamily. Interacts with the 50S ribosomal subunit. Forms a complex with the 50S ribosomal proteins L4 and L24, and a region near the 5'-end of 23S rRNA.

Its subcellular location is the cytoplasm. It catalyses the reaction ATP + H2O = ADP + phosphate + H(+). Functionally, DEAD-box RNA helicase involved in the assembly of the 50S ribosomal subunit at low temperature. Exhibits RNA-stimulated ATP hydrolysis and RNA unwinding activity. Acts before DeaD. The protein is ATP-dependent RNA helicase SrmB of Escherichia coli (strain K12).